The following is a 578-amino-acid chain: Asparagine synthetase [glutamine-hydrolyzing] 2 (578 aa).

Cysteine 2 serves as the catalytic For GATase activity. In terms of domain architecture, Glutamine amidotransferase type-2 spans 2 to 185; that stretch reads CGILAVLGCI…PGHIYSSKQG (184 aa). Residues 50 to 54, 75 to 77, and aspartate 98 contribute to the L-glutamine site; these read RLAII and NGE. One can recognise an Asparagine synthetase domain in the interval 210 to 450; it reads LRNAFEKAVI…LPKHILYRQK (241 aa). Residues leucine 231, isoleucine 267, and 341 to 342 each bind ATP; that span reads SG.

Expressed in the vascular region adjacent to leaf mesophyll cells in the companion cell-sieve tube element complex.

The enzyme catalyses L-aspartate + L-glutamine + ATP + H2O = L-asparagine + L-glutamate + AMP + diphosphate + H(+). It participates in amino-acid biosynthesis; L-asparagine biosynthesis. Functionally, essential for nitrogen assimilation, distribution and remobilization within the plant via the phloem. This Arabidopsis thaliana (Mouse-ear cress) protein is Asparagine synthetase [glutamine-hydrolyzing] 2 (ASN2).